Consider the following 217-residue polypeptide: LexA repressor (217 aa).

A DNA-binding region (H-T-H motif) is located at residues arginine 28 to arginine 48. Catalysis depends on for autocatalytic cleavage activity residues serine 136 and lysine 173.

This sequence belongs to the peptidase S24 family. Homodimer.

It carries out the reaction Hydrolysis of Ala-|-Gly bond in repressor LexA.. Its function is as follows. Represses a number of genes involved in the response to DNA damage (SOS response), including recA and lexA. In the presence of single-stranded DNA, RecA interacts with LexA causing an autocatalytic cleavage which disrupts the DNA-binding part of LexA, leading to derepression of the SOS regulon and eventually DNA repair. This Cupriavidus taiwanensis (strain DSM 17343 / BCRC 17206 / CCUG 44338 / CIP 107171 / LMG 19424 / R1) (Ralstonia taiwanensis (strain LMG 19424)) protein is LexA repressor.